The primary structure comprises 446 residues: Histidine--tRNA ligase (446 aa).

This sequence belongs to the class-II aminoacyl-tRNA synthetase family. Homodimer.

Its subcellular location is the cytoplasm. The enzyme catalyses tRNA(His) + L-histidine + ATP = L-histidyl-tRNA(His) + AMP + diphosphate + H(+). In Burkholderia ambifaria (strain MC40-6), this protein is Histidine--tRNA ligase.